The primary structure comprises 389 residues: MKINYPLLALAIGAFGIGTTEFSPMGLLPVIARGVDVSIPAAGMLISAYAVGVMVGAPLMTLLLSHRARRSALIFLMAIFTLGNVLSAIAPDYMTLMLSRILTSLNHGAFFGLGSVVAASVVPKHKQASAVATMFMGLTLANIGGVPAATWLGETIGWRMSFLATAGLGVISMVSLFFSLPKGGAGARPEVKKELAVLMRPQVLSALLTTVLGAGAMFTLYTYISPVLQSITHATPVFVTAMLVLIGVGFSIGNYLGGKLADRSVNGTLKGFLLLLMVIMLAIPFLARNEFGAAISMVVWGAATFAVVPPLQMRVMRVASEAPGLSSSVNIGAFNLGNALGAAAGGAVISAGLGYSFVPVMGAIVAGLALLLVFMSARKQPETVCVANS.

Over 1-6 (MKINYP) the chain is Cytoplasmic. The chain crosses the membrane as a helical span at residues 7 to 27 (LLALAIGAFGIGTTEFSPMGL). At 28-43 (LPVIARGVDVSIPAAG) the chain is on the periplasmic side. A helical transmembrane segment spans residues 44-64 (MLISAYAVGVMVGAPLMTLLL). At 65–70 (SHRARR) the chain is on the cytoplasmic side. The helical transmembrane segment at 71-91 (SALIFLMAIFTLGNVLSAIAP) threads the bilayer. Topologically, residues 92 to 100 (DYMTLMLSR) are periplasmic. Residues 101-121 (ILTSLNHGAFFGLGSVVAASV) traverse the membrane as a helical segment. The Cytoplasmic portion of the chain corresponds to 122 to 130 (VPKHKQASA). The chain crosses the membrane as a helical span at residues 131–151 (VATMFMGLTLANIGGVPAATW). Topologically, residues 152–159 (LGETIGWR) are periplasmic. A helical membrane pass occupies residues 160–180 (MSFLATAGLGVISMVSLFFSL). Residues 181–203 (PKGGAGARPEVKKELAVLMRPQV) are Cytoplasmic-facing. A helical membrane pass occupies residues 204 to 224 (LSALLTTVLGAGAMFTLYTYI). The Periplasmic segment spans residues 225 to 236 (SPVLQSITHATP). The helical transmembrane segment at 237-257 (VFVTAMLVLIGVGFSIGNYLG) threads the bilayer. Residues 258–266 (GKLADRSVN) are Cytoplasmic-facing. A helical transmembrane segment spans residues 267–287 (GTLKGFLLLLMVIMLAIPFLA). At 288–290 (RNE) the chain is on the periplasmic side. A helical membrane pass occupies residues 291–311 (FGAAISMVVWGAATFAVVPPL). Residues 312-330 (QMRVMRVASEAPGLSSSVN) are Cytoplasmic-facing. Residues 331 to 351 (IGAFNLGNALGAAAGGAVISA) traverse the membrane as a helical segment. Topologically, residues 352–356 (GLGYS) are periplasmic. Residues 357–377 (FVPVMGAIVAGLALLLVFMSA) traverse the membrane as a helical segment. The Cytoplasmic segment spans residues 378–389 (RKQPETVCVANS).

The protein belongs to the major facilitator superfamily.

Its subcellular location is the cell inner membrane. This Escherichia coli (strain K12) protein is Inner membrane transport protein YdhP (ydhP).